Here is a 150-residue protein sequence, read N- to C-terminus: Ribosome maturation factor RimP (150 aa).

Belongs to the RimP family.

Its subcellular location is the cytoplasm. In terms of biological role, required for maturation of 30S ribosomal subunits. The sequence is that of Ribosome maturation factor RimP from Hahella chejuensis (strain KCTC 2396).